The following is a 102-amino-acid chain: Urease subunit beta (102 aa).

This sequence belongs to the urease beta subunit family. Heterotrimer of UreA (gamma), UreB (beta) and UreC (alpha) subunits. Three heterotrimers associate to form the active enzyme.

It localises to the cytoplasm. It carries out the reaction urea + 2 H2O + H(+) = hydrogencarbonate + 2 NH4(+). It functions in the pathway nitrogen metabolism; urea degradation; CO(2) and NH(3) from urea (urease route): step 1/1. In Bordetella parapertussis (strain 12822 / ATCC BAA-587 / NCTC 13253), this protein is Urease subunit beta.